The chain runs to 141 residues: Photosystem II protein PSBR, chloroplastic (141 aa).

Residues 1-27 constitute a chloroplast transit peptide; it reads MATMQISAKGLAPLRPRVSSRRVVKPV. 2 positions are modified to phosphothreonine: T34 and T37. Phosphoserine is present on S43. The chain crosses the membrane as a helical span at residues 114–134; that stretch reads GLIAWAGLVLVLLAVGVNLII.

It belongs to the psbR family.

Its subcellular location is the plastid. It is found in the chloroplast thylakoid membrane. Its function is as follows. Associated with the oxygen-evolving complex of photosystem II (PSII). Is required for the stable binding of LHCSR3 to PSII-LHCII supercomplexes and is essential for efficient energy-dependent quenching and the integrity of the PSII-LHCII-LHCSR3 supercomplex under continuous high light. This is Photosystem II protein PSBR, chloroplastic from Chlamydomonas reinhardtii (Chlamydomonas smithii).